A 238-amino-acid polypeptide reads, in one-letter code: Orotidine 5'-phosphate decarboxylase (238 aa).

Residues aspartate 10, lysine 32, 59–68 (DLKLHDIPNT), threonine 122, arginine 184, glutamine 193, glycine 213, and arginine 214 contribute to the substrate site. Residue lysine 61 is the Proton donor of the active site.

Belongs to the OMP decarboxylase family. Type 1 subfamily. Homodimer.

It catalyses the reaction orotidine 5'-phosphate + H(+) = UMP + CO2. Its pathway is pyrimidine metabolism; UMP biosynthesis via de novo pathway; UMP from orotate: step 2/2. Catalyzes the decarboxylation of orotidine 5'-monophosphate (OMP) to uridine 5'-monophosphate (UMP). In Bacillus cereus (strain ZK / E33L), this protein is Orotidine 5'-phosphate decarboxylase.